A 209-amino-acid polypeptide reads, in one-letter code: Cilia- and flagella-associated protein 418 (209 aa).

The required for interaction with FAM161A stretch occupies residues 1-76 (MAKDLDELLD…LINEIFEEPD (76 aa)). The interval 24-58 (LDLGERPKGDGGGGSHSGDRNGAQEKETLRSTETF) is disordered. A compositionally biased stretch (basic and acidic residues) spans 40 to 58 (SGDRNGAQEKETLRSTETF).

In terms of assembly, interacts (via N-terminus) with FAM161A (via central region); the interaction is direct. As to expression, expressed in multiple tissues, including the brain, kidney, lung, spleen, heart, trachea and testis. Expressed in the retina (at protein level).

The protein resides in the cytoplasm. Its subcellular location is the photoreceptor inner segment. In terms of biological role, may be involved in photoreceptor outer segment disk morphogenesis. This chain is Cilia- and flagella-associated protein 418, found in Mus musculus (Mouse).